Reading from the N-terminus, the 541-residue chain is T-complex protein 1 subunit epsilon (541 aa).

A2 bears the N-acetylalanine mark. K20 is covalently cross-linked (Glycyl lysine isopeptide (Lys-Gly) (interchain with G-Cter in SUMO2)). At S26 the chain carries Phosphoserine. ADP is bound at residue G53. G53 serves as a coordination point for ATP. D104 is a binding site for Mg(2+). G105, T106, T107, and S175 together coordinate ADP. T106 and T107 together coordinate ATP. Glycyl lysine isopeptide (Lys-Gly) (interchain with G-Cter in SUMO2) cross-links involve residues K210, K214, K265, K275, and K279. S346 carries the phosphoserine modification. K392 participates in a covalent cross-link: Glycyl lysine isopeptide (Lys-Gly) (interchain with G-Cter in SUMO2). ADP-binding residues include G422, D492, E508, and K513. G422 provides a ligand contact to ATP. The residue at position 539 (S539) is a Phosphoserine.

This sequence belongs to the TCP-1 chaperonin family. Component of the chaperonin-containing T-complex (TRiC), a hexadecamer composed of two identical back-to-back stacked rings enclosing a protein folding chamber. Each ring is made up of eight different subunits: TCP1/CCT1, CCT2, CCT3, CCT4, CCT5, CCT6A/CCT6, CCT7, CCT8. Interacts with PACRG. Interacts with DNAAF4. Interacts with DLEC1. Interacts with SPMAP2. Post-translationally, ubiquitinated by the DCX(DCAF12) complex specifically recognizes the diglutamate (Glu-Glu) at the C-terminus, leading to its degradation.

The protein resides in the cytoplasm. It localises to the cytoskeleton. Its subcellular location is the microtubule organizing center. It is found in the centrosome. It catalyses the reaction ATP + H2O = ADP + phosphate + H(+). In terms of biological role, component of the chaperonin-containing T-complex (TRiC), a molecular chaperone complex that assists the folding of actin, tubulin and other proteins upon ATP hydrolysis. The TRiC complex mediates the folding of WRAP53/TCAB1, thereby regulating telomere maintenance. As part of the TRiC complex may play a role in the assembly of BBSome, a complex involved in ciliogenesis regulating transports vesicles to the cilia. The sequence is that of T-complex protein 1 subunit epsilon (Cct5) from Rattus norvegicus (Rat).